The chain runs to 754 residues: Ubiquitin carboxyl-terminal hydrolase 9 (754 aa).

The span at 1–14 shows a compositional bias: basic residues; sequence MIKRWLSVNRKKSH. Residues 1 to 76 are disordered; sequence MIKRWLSVNR…SKFSSQTDNL (76 aa). Positions 42–58 are enriched in low complexity; that stretch reads SIAKSPSAKSSTSSIPS. The USP domain maps to 134-667; it reads FGYENFGNTC…TAYVLFYKET (534 aa). Cysteine 143 serves as the catalytic Nucleophile. A compositionally biased stretch (polar residues) spans 194–209; the sequence is ETSTNSGNSNTGYQSN. Positions 194 to 273 are disordered; the sequence is ETSTNSGNSN…DNNEMERPQP (80 aa). A compositionally biased stretch (low complexity) spans 222–233; the sequence is QSDQDNSSSSTQ. Residues 250–272 show a composition bias toward basic and acidic residues; that stretch reads GKDKSNYKDSAKKDDNNEMERPQ. The active-site Proton acceptor is the histidine 618. The segment at 726–754 is disordered; that stretch reads VKTAETKTPLNDKKRNKQKRKSRILSFIK. Basic and acidic residues predominate over residues 727-738; it reads KTAETKTPLNDK. The segment covering 739–748 has biased composition (basic residues); the sequence is KRNKQKRKSR.

The protein belongs to the peptidase C19 family.

The enzyme catalyses Thiol-dependent hydrolysis of ester, thioester, amide, peptide and isopeptide bonds formed by the C-terminal Gly of ubiquitin (a 76-residue protein attached to proteins as an intracellular targeting signal).. This is Ubiquitin carboxyl-terminal hydrolase 9 (UBP9) from Saccharomyces cerevisiae (strain ATCC 204508 / S288c) (Baker's yeast).